Reading from the N-terminus, the 174-residue chain is RNA pyrophosphohydrolase (174 aa).

The Nudix hydrolase domain maps to Gly6–Lys149. A Nudix box motif is present at residues Gly38–Gly59.

Belongs to the Nudix hydrolase family. RppH subfamily. The cofactor is a divalent metal cation.

In terms of biological role, accelerates the degradation of transcripts by removing pyrophosphate from the 5'-end of triphosphorylated RNA, leading to a more labile monophosphorylated state that can stimulate subsequent ribonuclease cleavage. The sequence is that of RNA pyrophosphohydrolase from Neisseria meningitidis serogroup A / serotype 4A (strain DSM 15465 / Z2491).